The following is a 284-amino-acid chain: Bifunctional protein FolD (284 aa).

NADP(+) contacts are provided by residues Gly163–Ser165, Ile188, and Ile229.

The protein belongs to the tetrahydrofolate dehydrogenase/cyclohydrolase family. In terms of assembly, homodimer.

It catalyses the reaction (6R)-5,10-methylene-5,6,7,8-tetrahydrofolate + NADP(+) = (6R)-5,10-methenyltetrahydrofolate + NADPH. The enzyme catalyses (6R)-5,10-methenyltetrahydrofolate + H2O = (6R)-10-formyltetrahydrofolate + H(+). It participates in one-carbon metabolism; tetrahydrofolate interconversion. In terms of biological role, catalyzes the oxidation of 5,10-methylenetetrahydrofolate to 5,10-methenyltetrahydrofolate and then the hydrolysis of 5,10-methenyltetrahydrofolate to 10-formyltetrahydrofolate. The polypeptide is Bifunctional protein FolD (Nautilia profundicola (strain ATCC BAA-1463 / DSM 18972 / AmH)).